The sequence spans 321 residues: MAAAEAPRLAGMVVALQANFLEVELETFNPSSLVSWTGSTDDEPLRLLCTRRTRLDHRGAAVHVGDRVWVEAIDWQERRAVVGDVEPRQSWINRPPVANVTAVVVALAVKQPCFDADQASRFLLSAEQTGVDVHLILTKRDLITSDQLEQQLVRLRGWGYRPMAVSVQTGEGLGALKNKLSSTRLAVFCGPSGVGKTSLLNQLLPQLSLRVGAVSGRLKRGRHTTRHVELFRLCEGSLVADTPGFNRPELPADLRKLAVLFPELDGQLEDYPCRFRDCFHRDEPGCGVDKSWERYPIYKRFLEEMECLTRSSRGGSGSGLL.

Residues 89–248 (QSWINRPPVA…VADTPGFNRP (160 aa)) form the CP-type G domain. GTP contacts are provided by residues 138–141 (TKRD) and 190–198 (GPSGVGKTS). Zn(2+) is bound by residues cysteine 273, cysteine 278, histidine 280, and cysteine 286.

This sequence belongs to the TRAFAC class YlqF/YawG GTPase family. RsgA subfamily. Monomer. Associates with 30S ribosomal subunit, binds 16S rRNA. It depends on Zn(2+) as a cofactor.

The protein localises to the cytoplasm. Functionally, one of several proteins that assist in the late maturation steps of the functional core of the 30S ribosomal subunit. Helps release RbfA from mature subunits. May play a role in the assembly of ribosomal proteins into the subunit. Circularly permuted GTPase that catalyzes slow GTP hydrolysis, GTPase activity is stimulated by the 30S ribosomal subunit. The polypeptide is Small ribosomal subunit biogenesis GTPase RsgA (Prochlorococcus marinus (strain MIT 9313)).